A 238-amino-acid polypeptide reads, in one-letter code: Ribitol-5-phosphate cytidylyltransferase (238 aa).

Residues 7-10 and 81-87 each bind CTP; these read LAGG and GDDRNHS.

It belongs to the IspD/TarI cytidylyltransferase family. TarI subfamily.

The enzyme catalyses D-ribitol 5-phosphate + CTP + H(+) = CDP-L-ribitol + diphosphate. It participates in cell wall biogenesis; poly(ribitol phosphate) teichoic acid biosynthesis. Its function is as follows. Catalyzes the transfer of the cytidylyl group of CTP to D-ribitol 5-phosphate. This is Ribitol-5-phosphate cytidylyltransferase from Staphylococcus epidermidis (strain ATCC 12228 / FDA PCI 1200).